We begin with the raw amino-acid sequence, 290 residues long: MNDDASMSSMGLRGWGAFYEPPARNLGLQLMSSVPADRDTKHLLSATPFLHHHQHQQYVPHHHHQPHHPRDCGTNANANGNGNGVGYGMMPATHTLRMLQHQPEPQPQLQHPPSPPHPKEECISPPLMEENVPVKPPPPKKRQQGRQPKVLRPKKPKKPAAPCEDGAPPSAPAPRRRGPRKNIGMVINGIDLDLSRIPTRICSCTGAPQQRYRWGAGGWQSACCTTTVSTYPLPMSMKPRGARIAGRKMSHGAFKKVLEKLASEGYNLNNPIDLKTFWAKHGTNKFVTIR.

2 disordered regions span residues 60–90 and 102–183; these read PHHH…YGMM and QPEP…RKNI. A compositionally biased stretch (pro residues) spans 104-116; it reads EPQPQLQHPPSPP. Residues 138 to 158 are compositionally biased toward basic residues; sequence PPKKRQQGRQPKVLRPKKPKK.

It belongs to the BBR/BPC family.

It localises to the nucleus. Functionally, transcriptional regulator that specifically binds to GA-rich elements (GAGA-repeats) present in regulatory sequences of genes involved in developmental processes. The polypeptide is Barley B recombinant-like protein C (Oryza sativa subsp. japonica (Rice)).